Consider the following 321-residue polypeptide: 4-hydroxy-2-oxoglutarate aldolase, mitochondrial (321 aa).

Residues 1 to 23 constitute a mitochondrion transit peptide; the sequence is MLGPQIWASMRQGLSRGLSRNVK. Residue 71–72 participates in substrate binding; sequence ST. Residue Lys190 is the Schiff-base intermediate with substrate of the active site. Ser192 and Gly216 together coordinate substrate.

The protein belongs to the DapA family. As to quaternary structure, homotetramer.

The protein localises to the mitochondrion. The catalysed reaction is (4S)-4-hydroxy-2-oxoglutarate = glyoxylate + pyruvate. It catalyses the reaction (4R)-4-hydroxy-2-oxoglutarate = glyoxylate + pyruvate. Inhibited by divalent cations. Catalyzes the final step in the metabolic pathway of hydroxyproline. The protein is 4-hydroxy-2-oxoglutarate aldolase, mitochondrial (Hoga1) of Mus musculus (Mouse).